The following is a 521-amino-acid chain: Lysine--tRNA ligase (521 aa).

Positions 32–40 match the 'HIGH' region motif; the sequence is PSGTVHIGN. A 'KMSKS' region motif is present at residues 280-284; sequence KISSS.

This sequence belongs to the class-I aminoacyl-tRNA synthetase family.

The protein localises to the cytoplasm. The catalysed reaction is tRNA(Lys) + L-lysine + ATP = L-lysyl-tRNA(Lys) + AMP + diphosphate. The chain is Lysine--tRNA ligase from Borrelia garinii subsp. bavariensis (strain ATCC BAA-2496 / DSM 23469 / PBi) (Borreliella bavariensis).